The following is a 712-amino-acid chain: Anaerobic ribonucleoside-triphosphate reductase (712 aa).

The ATP-cone domain maps to 3–92; that stretch reads PHVMKRDGCK…EYRHDRDIQR (90 aa). In terms of domain architecture, Glycine radical spans 583-708; the sequence is KKVNPYDKID…VKRRVKHLGN (126 aa). Positions 644, 647, 662, and 665 each coordinate Zn(2+). Glycine 681 carries the glycine radical modification.

It belongs to the anaerobic ribonucleoside-triphosphate reductase family. Forms a tetramer composed of two NrdD and two NrdG subunits.

It catalyses the reaction a ribonucleoside 5'-triphosphate + formate + H(+) = a 2'-deoxyribonucleoside 5'-triphosphate + CO2 + H2O. Activated under anaerobic conditions by NrdG, a tightly associated activase. Activation involves the formation of a glycyl radical at Gly-681. In terms of biological role, catalyzes the conversion of ribonucleotides into deoxyribonucleotides, which are required for DNA synthesis and repair. The protein is Anaerobic ribonucleoside-triphosphate reductase (nrdD) of Salmonella typhimurium (strain LT2 / SGSC1412 / ATCC 700720).